Here is a 60-residue protein sequence, read N- to C-terminus: Insect toxin mu-NPTX-Nc1a (60 aa).

Residues 1-19 (MIYQVVLLLLVSPAPVSAA) form the signal peptide.

Post-translationally, contains 4 disulfide bonds. In terms of tissue distribution, expressed by the venom gland.

It localises to the secreted. Functionally, insect-specific toxin. Blocks voltage-gated potassium and sodium channels. This Trichonephila clavata (Joro spider) protein is Insect toxin mu-NPTX-Nc1a.